The sequence spans 371 residues: 3-dehydroquinate synthase (371 aa).

Residues 114 to 118, 138 to 139, lysine 151, lysine 160, and 178 to 181 contribute to the NAD(+) site; these read GVVGD, TT, and TLNT. Glutamate 193, histidine 258, and histidine 275 together coordinate Zn(2+).

This sequence belongs to the sugar phosphate cyclases superfamily. Dehydroquinate synthase family. Co(2+) is required as a cofactor. It depends on Zn(2+) as a cofactor. The cofactor is NAD(+).

Its subcellular location is the cytoplasm. It catalyses the reaction 7-phospho-2-dehydro-3-deoxy-D-arabino-heptonate = 3-dehydroquinate + phosphate. The protein operates within metabolic intermediate biosynthesis; chorismate biosynthesis; chorismate from D-erythrose 4-phosphate and phosphoenolpyruvate: step 2/7. Its function is as follows. Catalyzes the conversion of 3-deoxy-D-arabino-heptulosonate 7-phosphate (DAHP) to dehydroquinate (DHQ). This chain is 3-dehydroquinate synthase, found in Synechococcus sp. (strain CC9605).